The following is a 161-amino-acid chain: MVIAVYPGTFDPMTRGHEDLVRRASNIFDELVVGVAHSPNKRPFFSLEERIGIAREVLGHYPNVRVEGFSGLLKDFVRNNNARVIVRGLRAVSDFEYEFQMAGMNRYLLPDVETMFLTPSDQYQFISGTFVREIAVLGGDVSKFVFPSVERWLQEKIGKPE.

Substrate is bound at residue Thr9. ATP-binding positions include 9 to 10 and His17; that span reads TF. Substrate-binding residues include Lys41, Leu73, and Arg87. ATP-binding positions include 88–90, Glu98, and 123–129; these read GLR and YQFISGT.

The protein belongs to the bacterial CoaD family. In terms of assembly, homohexamer. The cofactor is Mg(2+).

The protein localises to the cytoplasm. The enzyme catalyses (R)-4'-phosphopantetheine + ATP + H(+) = 3'-dephospho-CoA + diphosphate. It participates in cofactor biosynthesis; coenzyme A biosynthesis; CoA from (R)-pantothenate: step 4/5. Reversibly transfers an adenylyl group from ATP to 4'-phosphopantetheine, yielding dephospho-CoA (dPCoA) and pyrophosphate. This Cupriavidus necator (strain ATCC 17699 / DSM 428 / KCTC 22496 / NCIMB 10442 / H16 / Stanier 337) (Ralstonia eutropha) protein is Phosphopantetheine adenylyltransferase.